We begin with the raw amino-acid sequence, 262 residues long: Small ribosomal subunit protein eS1z (262 aa).

The span at 1 to 18 shows a compositional bias: basic residues; the sequence is MAVGKNKRISKGRKGGKK. A disordered region spans residues 1 to 21; the sequence is MAVGKNKRISKGRKGGKKKAV.

This sequence belongs to the eukaryotic ribosomal protein eS1 family. Component of the small ribosomal subunit. Mature ribosomes consist of a small (40S) and a large (60S) subunit. The 40S subunit contains about 33 different proteins and 1 molecule of RNA (18S). The 60S subunit contains about 49 different proteins and 3 molecules of RNA (25S, 5.8S and 5S).

It is found in the cytoplasm. This is Small ribosomal subunit protein eS1z from Arabidopsis thaliana (Mouse-ear cress).